The primary structure comprises 24 residues: Small ribosomal subunit protein uS5 (24 aa).

Belongs to the universal ribosomal protein uS5 family. As to quaternary structure, part of the 30S ribosomal subunit. Contacts proteins S4 and S8.

Its function is as follows. With S4 and S12 plays an important role in translational accuracy. Located at the back of the 30S subunit body where it stabilizes the conformation of the head with respect to the body. This Vibrio proteolyticus (Aeromonas proteolytica) protein is Small ribosomal subunit protein uS5 (rpsE).